Here is a 330-residue protein sequence, read N- to C-terminus: Putative [LysW]-L-2-aminoadipate/[LysW]-L-glutamate phosphate reductase (330 aa).

NADP(+) is bound at residue 10 to 13 (SGYI). Residue cysteine 142 is part of the active site. An NADP(+)-binding site is contributed by asparagine 297.

This sequence belongs to the NAGSA dehydrogenase family. Type 1 subfamily. LysY sub-subfamily.

It localises to the cytoplasm. The catalysed reaction is [amino-group carrier protein]-C-terminal-N-(1-carboxy-5-oxopentan-1-yl)-L-glutamine + phosphate + NADP(+) = [amino-group carrier protein]-C-terminal-N-(1-carboxy-5-phosphooxy-5-oxopentan-1-yl)-L-glutamine + NADPH + H(+). The enzyme catalyses [amino-group carrier protein]-C-terminal-gamma-(L-glutamyl-5-semialdehyde)-L-glutamate + phosphate + NADP(+) = [amino-group carrier protein]-C-terminal-gamma-(5-phospho-L-glutamyl)-L-glutamate + NADPH + H(+). The protein operates within amino-acid biosynthesis; L-lysine biosynthesis via AAA pathway; L-lysine from L-alpha-aminoadipate (Thermus route): step 3/5. It participates in amino-acid biosynthesis; L-arginine biosynthesis. Its function is as follows. Involved in both the arginine and lysine biosynthetic pathways. This Pyrococcus furiosus (strain ATCC 43587 / DSM 3638 / JCM 8422 / Vc1) protein is Putative [LysW]-L-2-aminoadipate/[LysW]-L-glutamate phosphate reductase.